We begin with the raw amino-acid sequence, 444 residues long: MPGIKVFGETVLRGSVRVSGAKNATTKLLVASLLSDQRTILKNVPNIEDVRQTVDLCRVLGAIVEWDQQAQVIEIHTPRILLSKVPPQFSCVNRIPILLLGALLRRCPYGIFVPILGGDAIGPRTLHFHLEGLKKLGAEIVISDEGYWASAPNGLVGAHITLPYPSVGATENLILASVGAQGRTIIKNAALEVEIIDLIVFLQKAGMEITTDNDKTIEIFGCQDFYSVEHSIIPDKIEAASFGMAAVVSQGRIFVEQARHEHMIPFLKVLRSIGGGFSVHENGIEFFYDKPLKGGVLLETDVHPGFITDWQQPFAVLLSQSEGCSVIHETVHENRLGYLKGLVKMGAHCDLFHECLSAKSCRYSTGNHPHSAVIHGPTPLQATDLVIPDLRAGFAYVMAALITEGGASWIENTEMLDRGYTDWRGKLERLGAKVLARDSVSVYV.

22–23 (KN) is a binding site for phosphoenolpyruvate. R94 is a UDP-N-acetyl-alpha-D-glucosamine binding site. D119 functions as the Proton donor in the catalytic mechanism. 2 residues coordinate UDP-N-acetyl-alpha-D-glucosamine: D309 and V331.

This sequence belongs to the EPSP synthase family. MurA subfamily.

It localises to the cytoplasm. The enzyme catalyses phosphoenolpyruvate + UDP-N-acetyl-alpha-D-glucosamine = UDP-N-acetyl-3-O-(1-carboxyvinyl)-alpha-D-glucosamine + phosphate. The protein operates within cell wall biogenesis; peptidoglycan biosynthesis. Its function is as follows. Cell wall formation. Adds enolpyruvyl to UDP-N-acetylglucosamine. In Chlamydia trachomatis serovar A (strain ATCC VR-571B / DSM 19440 / HAR-13), this protein is UDP-N-acetylglucosamine 1-carboxyvinyltransferase.